A 151-amino-acid polypeptide reads, in one-letter code: Small heat shock protein HspH (151 aa).

A sHSP domain is found at 28-138 (RAGEDNYPPY…KPRRIAINAA (111 aa)).

This sequence belongs to the small heat shock protein (HSP20) family.

The protein is Small heat shock protein HspH (hspH) of Bradyrhizobium diazoefficiens (strain JCM 10833 / BCRC 13528 / IAM 13628 / NBRC 14792 / USDA 110).